The primary structure comprises 885 residues: DNA-directed RNA polymerase subunit Rpo1N (885 aa).

8 residues coordinate Zn(2+): C60, C63, C70, H73, C100, C103, C150, and C153. Residues D464, D466, and D468 each coordinate Mg(2+).

The protein belongs to the RNA polymerase beta' chain family. In terms of assembly, part of the RNA polymerase complex. Requires Mg(2+) as cofactor. Zn(2+) serves as cofactor.

Its subcellular location is the cytoplasm. It carries out the reaction RNA(n) + a ribonucleoside 5'-triphosphate = RNA(n+1) + diphosphate. Functionally, DNA-dependent RNA polymerase (RNAP) catalyzes the transcription of DNA into RNA using the four ribonucleoside triphosphates as substrates. Forms the clamp head domain. The sequence is that of DNA-directed RNA polymerase subunit Rpo1N from Thermoplasma acidophilum (strain ATCC 25905 / DSM 1728 / JCM 9062 / NBRC 15155 / AMRC-C165).